We begin with the raw amino-acid sequence, 380 residues long: Alcohol dehydrogenase 2 (380 aa).

Zn(2+) is bound by residues cysteine 48, threonine 50, histidine 70, cysteine 100, cysteine 103, cysteine 106, cysteine 114, and cysteine 178. An alcohol contacts are provided by threonine 50 and histidine 70. Threonine 50 contributes to the NAD(+) binding site. Residues glycine 203 to glycine 208, aspartate 227, arginine 232, threonine 273, valine 296, valine 296 to valine 298, phenylalanine 323, and arginine 373 each bind NAD(+).

This sequence belongs to the zinc-containing alcohol dehydrogenase family. In terms of assembly, homodimer. Homotetramer. Zn(2+) serves as cofactor.

It localises to the cytoplasm. The catalysed reaction is a primary alcohol + NAD(+) = an aldehyde + NADH + H(+). It catalyses the reaction a secondary alcohol + NAD(+) = a ketone + NADH + H(+). This Solanum lycopersicum (Tomato) protein is Alcohol dehydrogenase 2 (ADH2).